Reading from the N-terminus, the 387-residue chain is Dual-specificity RNA methyltransferase RlmN (387 aa).

Glu-93 serves as the catalytic Proton acceptor. A Radical SAM core domain is found at 99-343; sequence EENRGTLCIS…TTVRKTRGDD (245 aa). A disulfide bridge connects residues Cys-106 and Cys-348. Residues Cys-113, Cys-117, and Cys-120 each contribute to the [4Fe-4S] cluster site. S-adenosyl-L-methionine contacts are provided by residues 172 to 173, Ser-204, 226 to 228, and Asn-305; these read GE and SLH. The S-methylcysteine intermediate role is filled by Cys-348.

Belongs to the radical SAM superfamily. RlmN family. It depends on [4Fe-4S] cluster as a cofactor.

Its subcellular location is the cytoplasm. It catalyses the reaction adenosine(2503) in 23S rRNA + 2 reduced [2Fe-2S]-[ferredoxin] + 2 S-adenosyl-L-methionine = 2-methyladenosine(2503) in 23S rRNA + 5'-deoxyadenosine + L-methionine + 2 oxidized [2Fe-2S]-[ferredoxin] + S-adenosyl-L-homocysteine. The enzyme catalyses adenosine(37) in tRNA + 2 reduced [2Fe-2S]-[ferredoxin] + 2 S-adenosyl-L-methionine = 2-methyladenosine(37) in tRNA + 5'-deoxyadenosine + L-methionine + 2 oxidized [2Fe-2S]-[ferredoxin] + S-adenosyl-L-homocysteine. Functionally, specifically methylates position 2 of adenine 2503 in 23S rRNA and position 2 of adenine 37 in tRNAs. m2A2503 modification seems to play a crucial role in the proofreading step occurring at the peptidyl transferase center and thus would serve to optimize ribosomal fidelity. The protein is Dual-specificity RNA methyltransferase RlmN of Janthinobacterium sp. (strain Marseille) (Minibacterium massiliensis).